Reading from the N-terminus, the 293-residue chain is Nitrogenase iron protein (293 aa).

10–17 (GKGGIGKS) contacts ATP. Cys98 is a [4Fe-4S] cluster binding site. Position 101 is an ADP-ribosylarginine; by dinitrogenase reductase ADP-ribosyltransferase (Arg101). Cys133 contributes to the [4Fe-4S] cluster binding site.

Belongs to the NifH/BchL/ChlL family. As to quaternary structure, homodimer. The cofactor is [4Fe-4S] cluster. In terms of processing, the reversible ADP-ribosylation of Arg-101 inactivates the nitrogenase reductase and regulates nitrogenase activity.

It catalyses the reaction N2 + 8 reduced [2Fe-2S]-[ferredoxin] + 16 ATP + 16 H2O = H2 + 8 oxidized [2Fe-2S]-[ferredoxin] + 2 NH4(+) + 16 ADP + 16 phosphate + 6 H(+). Functionally, the key enzymatic reactions in nitrogen fixation are catalyzed by the nitrogenase complex, which has 2 components: the iron protein and the molybdenum-iron protein. The sequence is that of Nitrogenase iron protein from Pectobacterium atrosepticum (strain SCRI 1043 / ATCC BAA-672) (Erwinia carotovora subsp. atroseptica).